The chain runs to 560 residues: Dihydroxy-acid dehydratase (560 aa).

Aspartate 80 serves as a coordination point for Mg(2+). Cysteine 121 serves as a coordination point for [2Fe-2S] cluster. Residues aspartate 122 and lysine 123 each contribute to the Mg(2+) site. Residue lysine 123 is modified to N6-carboxylysine. Residue cysteine 194 coordinates [2Fe-2S] cluster. A Mg(2+)-binding site is contributed by glutamate 447. The active-site Proton acceptor is the serine 473.

This sequence belongs to the IlvD/Edd family. In terms of assembly, homodimer. [2Fe-2S] cluster is required as a cofactor. Mg(2+) serves as cofactor.

It carries out the reaction (2R)-2,3-dihydroxy-3-methylbutanoate = 3-methyl-2-oxobutanoate + H2O. The enzyme catalyses (2R,3R)-2,3-dihydroxy-3-methylpentanoate = (S)-3-methyl-2-oxopentanoate + H2O. Its pathway is amino-acid biosynthesis; L-isoleucine biosynthesis; L-isoleucine from 2-oxobutanoate: step 3/4. It participates in amino-acid biosynthesis; L-valine biosynthesis; L-valine from pyruvate: step 3/4. Functions in the biosynthesis of branched-chain amino acids. Catalyzes the dehydration of (2R,3R)-2,3-dihydroxy-3-methylpentanoate (2,3-dihydroxy-3-methylvalerate) into 2-oxo-3-methylpentanoate (2-oxo-3-methylvalerate) and of (2R)-2,3-dihydroxy-3-methylbutanoate (2,3-dihydroxyisovalerate) into 2-oxo-3-methylbutanoate (2-oxoisovalerate), the penultimate precursor to L-isoleucine and L-valine, respectively. This is Dihydroxy-acid dehydratase from Chlorobaculum tepidum (strain ATCC 49652 / DSM 12025 / NBRC 103806 / TLS) (Chlorobium tepidum).